We begin with the raw amino-acid sequence, 545 residues long: CTP synthase (545 aa).

Positions 1 to 266 (MATNYIFVTG…DDFVCERFRL (266 aa)) are amidoligase domain. Ser-14 contributes to the CTP binding site. Ser-14 contacts UTP. Residues 15–20 (SLGKGI) and Asp-72 each bind ATP. Residues Asp-72 and Glu-140 each contribute to the Mg(2+) site. CTP contacts are provided by residues 147–149 (DIE), 187–192 (KTKPTQ), and Lys-223. Residues 187-192 (KTKPTQ) and Lys-223 contribute to the UTP site. Position 239-241 (239-241 (KDV)) interacts with ATP. A Glutamine amidotransferase type-1 domain is found at 291 to 542 (TIGMVGKYTE…VKAAYENHKK (252 aa)). Gly-352 serves as a coordination point for L-glutamine. Cys-379 (nucleophile; for glutamine hydrolysis) is an active-site residue. L-glutamine-binding positions include 380 to 383 (LGMQ), Glu-403, and Arg-470. Residues His-515 and Glu-517 contribute to the active site.

The protein belongs to the CTP synthase family. In terms of assembly, homotetramer.

It catalyses the reaction UTP + L-glutamine + ATP + H2O = CTP + L-glutamate + ADP + phosphate + 2 H(+). The enzyme catalyses L-glutamine + H2O = L-glutamate + NH4(+). The catalysed reaction is UTP + NH4(+) + ATP = CTP + ADP + phosphate + 2 H(+). It functions in the pathway pyrimidine metabolism; CTP biosynthesis via de novo pathway; CTP from UDP: step 2/2. Allosterically activated by GTP, when glutamine is the substrate; GTP has no effect on the reaction when ammonia is the substrate. The allosteric effector GTP functions by stabilizing the protein conformation that binds the tetrahedral intermediate(s) formed during glutamine hydrolysis. Inhibited by the product CTP, via allosteric rather than competitive inhibition. Catalyzes the ATP-dependent amination of UTP to CTP with either L-glutamine or ammonia as the source of nitrogen. Regulates intracellular CTP levels through interactions with the four ribonucleotide triphosphates. This chain is CTP synthase, found in Haemophilus influenzae (strain PittGG).